Here is a 248-residue protein sequence, read N- to C-terminus: tRNA (guanine-N(1)-)-methyltransferase (248 aa).

S-adenosyl-L-methionine contacts are provided by residues G113 and 133-138 (LGDFVL).

The protein belongs to the RNA methyltransferase TrmD family. Homodimer.

It is found in the cytoplasm. The catalysed reaction is guanosine(37) in tRNA + S-adenosyl-L-methionine = N(1)-methylguanosine(37) in tRNA + S-adenosyl-L-homocysteine + H(+). Specifically methylates guanosine-37 in various tRNAs. This chain is tRNA (guanine-N(1)-)-methyltransferase, found in Albidiferax ferrireducens (strain ATCC BAA-621 / DSM 15236 / T118) (Rhodoferax ferrireducens).